The primary structure comprises 473 residues: 3-isopropylmalate dehydratase large subunit (473 aa).

Residues Cys354, Cys414, and Cys417 each coordinate [4Fe-4S] cluster.

This sequence belongs to the aconitase/IPM isomerase family. LeuC type 1 subfamily. In terms of assembly, heterodimer of LeuC and LeuD. It depends on [4Fe-4S] cluster as a cofactor.

It catalyses the reaction (2R,3S)-3-isopropylmalate = (2S)-2-isopropylmalate. It functions in the pathway amino-acid biosynthesis; L-leucine biosynthesis; L-leucine from 3-methyl-2-oxobutanoate: step 2/4. Its function is as follows. Catalyzes the isomerization between 2-isopropylmalate and 3-isopropylmalate, via the formation of 2-isopropylmaleate. The chain is 3-isopropylmalate dehydratase large subunit from Rhodopseudomonas palustris (strain BisB18).